The primary structure comprises 336 residues: Myb family transcription factor PHL8 (336 aa).

The HTH myb-type domain maps to 31-91; it reads TDAKPRLKWT…HLQKYRLGKS (61 aa). Positions 62 to 87 form a DNA-binding region, H-T-H motif; the sequence is PKGLMKVMEIPGLTLYHLKSHLQKYR. The disordered stretch occupies residues 100–134; that stretch reads EVSSASENQEVESKNDSRDLRGCSVTEENSNPAKE. Residues 110 to 120 show a composition bias toward basic and acidic residues; it reads VESKNDSRDLR. A coiled-coil region spans residues 139–159; it reads TEALQMQMEVQKKLHEQIEVQ. The LHEQLE signature appears at 152–157; the sequence is LHEQIE.

This sequence belongs to the MYB-CC family.

The protein localises to the nucleus. The polypeptide is Myb family transcription factor PHL8 (Arabidopsis thaliana (Mouse-ear cress)).